Reading from the N-terminus, the 380-residue chain is Anhydro-N-acetylmuramic acid kinase (380 aa).

17–24 (GTSMDGAD) serves as a coordination point for ATP.

Belongs to the anhydro-N-acetylmuramic acid kinase family.

It carries out the reaction 1,6-anhydro-N-acetyl-beta-muramate + ATP + H2O = N-acetyl-D-muramate 6-phosphate + ADP + H(+). The protein operates within amino-sugar metabolism; 1,6-anhydro-N-acetylmuramate degradation. It participates in cell wall biogenesis; peptidoglycan recycling. Catalyzes the specific phosphorylation of 1,6-anhydro-N-acetylmuramic acid (anhMurNAc) with the simultaneous cleavage of the 1,6-anhydro ring, generating MurNAc-6-P. Is required for the utilization of anhMurNAc either imported from the medium or derived from its own cell wall murein, and thus plays a role in cell wall recycling. In Cupriavidus metallidurans (strain ATCC 43123 / DSM 2839 / NBRC 102507 / CH34) (Ralstonia metallidurans), this protein is Anhydro-N-acetylmuramic acid kinase.